The primary structure comprises 451 residues: Phosphoglucosamine mutase (451 aa).

Catalysis depends on S103, which acts as the Phosphoserine intermediate. Residues S103, D243, D245, and D247 each coordinate Mg(2+). S103 carries the post-translational modification Phosphoserine.

Belongs to the phosphohexose mutase family. Mg(2+) is required as a cofactor. Activated by phosphorylation.

It carries out the reaction alpha-D-glucosamine 1-phosphate = D-glucosamine 6-phosphate. Catalyzes the conversion of glucosamine-6-phosphate to glucosamine-1-phosphate. In Lactobacillus gasseri (strain ATCC 33323 / DSM 20243 / BCRC 14619 / CIP 102991 / JCM 1131 / KCTC 3163 / NCIMB 11718 / NCTC 13722 / AM63), this protein is Phosphoglucosamine mutase.